Reading from the N-terminus, the 600-residue chain is Monooxygenase ptmN (600 aa).

This sequence belongs to the FMO family. Requires FAD as cofactor.

The protein operates within secondary metabolite biosynthesis. Functionally, monooxygenase; part of the gene cluster that mediates the biosynthesis of the indole diterpenes penitrems. The geranylgeranyl diphosphate (GGPP) synthase ptmG catalyzes the first step in penitrem biosynthesis via conversion of farnesyl pyrophosphate and isopentyl pyrophosphate into geranylgeranyl pyrophosphate (GGPP). Condensation of indole-3-glycerol phosphate with GGPP by the prenyl transferase ptmC then forms 3-geranylgeranylindole (3-GGI). Epoxidation by the FAD-dependent monooxygenase ptmM leads to a epoxidized-GGI that is substrate of the terpene cyclase ptmB for cyclization to yield paspaline. Paspaline is subsequently converted to 13-desoxypaxilline by the cytochrome P450 monooxygenase ptmP, the latter being then converted to paxilline by the cytochrome P450 monooxygenase ptmQ. Paxilline is converted to beta-paxitriol via C-10 ketoreduction by the short-chain dehydrogenase ptmH which can be monoprenylated at the C-20 by the indole diterpene prenyltransferase ptmD. A two-step elimination (acetylation and elimination) process performed by the O-acetyltransferase ptmV and ptmI leads to the production of the prenylated form of penijanthine. The FAD-linked oxidoreductase ptmO then converts the prenylated form of penijanthine into PC-M5 which is in turn transformed into PC-M4 by the aromatic dimethylallyltransferase ptmE. Five sequential oxidative transformations performed by the cytochrome P450 monooxygenases ptmK, ptmU, ptmL, ptmN and ptmJ yield the various penitrem compounds. PtmK, ptmU and ptmM are involved in the formation of the key bicyclic ring of penitrem C via the formation of the intermediates secopenitrem D and penitrem D. PtmL catalyzes the epoxidation of penitrem D and C to yield penitrem B and F, respectively. PtmJ catalyzes the last benzylic hydroxylation to convert penitrem B to prenitrem E and penitrem F to penitrem A. This chain is Monooxygenase ptmN, found in Penicillium ochrochloron.